Reading from the N-terminus, the 198-residue chain is Holliday junction resolvase RecU (198 aa).

Residues Met-1–Asn-22 are disordered. Residues Gln-11 to Asn-22 are compositionally biased toward polar residues. Thr-81, Asp-83, Glu-96, and Gln-115 together coordinate Mg(2+).

The protein belongs to the RecU family. Mg(2+) is required as a cofactor.

It is found in the cytoplasm. The catalysed reaction is Endonucleolytic cleavage at a junction such as a reciprocal single-stranded crossover between two homologous DNA duplexes (Holliday junction).. Its function is as follows. Endonuclease that resolves Holliday junction intermediates in genetic recombination. Cleaves mobile four-strand junctions by introducing symmetrical nicks in paired strands. Promotes annealing of linear ssDNA with homologous dsDNA. Required for DNA repair, homologous recombination and chromosome segregation. This is Holliday junction resolvase RecU from Streptococcus pneumoniae (strain P1031).